A 357-amino-acid polypeptide reads, in one-letter code: Norreticuline-7-O-methyltransferase (357 aa).

An S-adenosyl-L-methionine-binding site is contributed by D225. H263 acts as the Proton acceptor in catalysis.

Belongs to the class I-like SAM-binding methyltransferase superfamily. Cation-independent O-methyltransferase family. As to expression, expressed instems, leaves, roots and seedlings.

In terms of biological role, involved in the biosynthesis of benzylisoquinoline alkaloids. Catalyzes specifically the methylation of norreticuline at position seven to produce norlaudanine. No activity with norcoclaurine, reticuline, norlaudanosoline, norisoorientaline, scoulerine, salutaridinol, oripavine, salsolinol, codeine or morphine. Involved in papaverine biosynthesis. The protein is Norreticuline-7-O-methyltransferase of Papaver somniferum (Opium poppy).